A 623-amino-acid chain; its full sequence is Glutamine--fructose-6-phosphate aminotransferase [isomerizing] (623 aa).

Catalysis depends on Cys-2, which acts as the Nucleophile; for GATase activity. The 227-residue stretch at 2–228 (CGIVGYIGQA…NDQVVTITAD (227 aa)) folds into the Glutamine amidotransferase type-2 domain. 2 SIS domains span residues 295–435 (IDES…LRGN) and 468–613 (LGRS…VDQP). Lys-618 (for Fru-6P isomerization activity) is an active-site residue.

Homodimer.

The protein localises to the cytoplasm. The enzyme catalyses D-fructose 6-phosphate + L-glutamine = D-glucosamine 6-phosphate + L-glutamate. In terms of biological role, catalyzes the first step in hexosamine metabolism, converting fructose-6P into glucosamine-6P using glutamine as a nitrogen source. This Corynebacterium efficiens (strain DSM 44549 / YS-314 / AJ 12310 / JCM 11189 / NBRC 100395) protein is Glutamine--fructose-6-phosphate aminotransferase [isomerizing].